The primary structure comprises 313 residues: Porphobilinogen deaminase (313 aa).

The residue at position 242 (Cys242) is an S-(dipyrrolylmethanemethyl)cysteine.

The protein belongs to the HMBS family. Monomer. Dipyrromethane serves as cofactor.

It carries out the reaction 4 porphobilinogen + H2O = hydroxymethylbilane + 4 NH4(+). The protein operates within porphyrin-containing compound metabolism; protoporphyrin-IX biosynthesis; coproporphyrinogen-III from 5-aminolevulinate: step 2/4. Functionally, tetrapolymerization of the monopyrrole PBG into the hydroxymethylbilane pre-uroporphyrinogen in several discrete steps. The protein is Porphobilinogen deaminase of Pseudomonas putida (strain ATCC 700007 / DSM 6899 / JCM 31910 / BCRC 17059 / LMG 24140 / F1).